The chain runs to 148 residues: Single-stranded DNA-binding protein, mitochondrial (148 aa).

The transit peptide at 1–16 directs the protein to the mitochondrion; the sequence is MFRRPALQVLRQFVRH. Residues 30–141 form the SSB domain; that stretch reads LNRVQLLGRV…IIADNIVFLS (112 aa). Ser-67 and Ser-79 each carry phosphoserine. N6-acetyllysine is present on Lys-113. The residue at position 122 (Lys-122) is an N6-succinyllysine.

In terms of assembly, homotetramer. Interacts with MPG/AAG, through inhibition of its glycosylase activity it potentially prevents formation of DNA breaks in ssDNA, ensuring that base removal primarily occurs in dsDNA. Interacts with POLDIP2. Interacts with PRIMPOL.

It localises to the mitochondrion. It is found in the mitochondrion matrix. Its subcellular location is the mitochondrion nucleoid. In terms of biological role, binds preferentially and cooperatively to pyrimidine rich single-stranded DNA (ss-DNA). In vitro, required to maintain the copy number of mitochondrial DNA (mtDNA) and plays a crucial role during mtDNA replication by stimulating the activity of the replisome components POLG and TWNK at the replication fork. Promotes the activity of the gamma complex polymerase POLG, largely by organizing the template DNA and eliminating secondary structures to favor ss-DNA conformations that facilitate POLG activity. In addition it is able to promote the 5'-3' unwinding activity of the mtDNA helicase TWNK. May also function in mtDNA repair. This Oryctolagus cuniculus (Rabbit) protein is Single-stranded DNA-binding protein, mitochondrial (SSBP1).